We begin with the raw amino-acid sequence, 398 residues long: 1-deoxy-D-xylulose 5-phosphate reductoisomerase (398 aa).

Residues T10, G11, S12, I13, G36, R37, N38, and N124 each coordinate NADPH. K125 contacts 1-deoxy-D-xylulose 5-phosphate. An NADPH-binding site is contributed by E126. D150 lines the Mn(2+) pocket. 1-deoxy-D-xylulose 5-phosphate contacts are provided by S151, E152, S186, and H209. Mn(2+) is bound at residue E152. G215 contributes to the NADPH binding site. Residues S222, N227, K228, and E231 each coordinate 1-deoxy-D-xylulose 5-phosphate. E231 lines the Mn(2+) pocket.

This sequence belongs to the DXR family. Homodimer. Requires Mg(2+) as cofactor. The cofactor is Mn(2+).

The catalysed reaction is 2-C-methyl-D-erythritol 4-phosphate + NADP(+) = 1-deoxy-D-xylulose 5-phosphate + NADPH + H(+). It participates in isoprenoid biosynthesis; isopentenyl diphosphate biosynthesis via DXP pathway; isopentenyl diphosphate from 1-deoxy-D-xylulose 5-phosphate: step 1/6. Its function is as follows. Catalyzes the NADPH-dependent rearrangement and reduction of 1-deoxy-D-xylulose-5-phosphate (DXP) to 2-C-methyl-D-erythritol 4-phosphate (MEP). The protein is 1-deoxy-D-xylulose 5-phosphate reductoisomerase of Yersinia pseudotuberculosis serotype O:1b (strain IP 31758).